The primary structure comprises 476 residues: ATP synthase subunit beta 2 (476 aa).

160–167 (GGAGVGKT) serves as a coordination point for ATP.

It belongs to the ATPase alpha/beta chains family. F-type ATPases have 2 components, CF(1) - the catalytic core - and CF(0) - the membrane proton channel. CF(1) has five subunits: alpha(3), beta(3), gamma(1), delta(1), epsilon(1). CF(0) has four main subunits: a(1), b(1), b'(1) and c(9-12).

It is found in the cell inner membrane. The enzyme catalyses ATP + H2O + 4 H(+)(in) = ADP + phosphate + 5 H(+)(out). In terms of biological role, produces ATP from ADP in the presence of a proton gradient across the membrane. The catalytic sites are hosted primarily by the beta subunits. The sequence is that of ATP synthase subunit beta 2 from Bradyrhizobium sp. (strain BTAi1 / ATCC BAA-1182).